A 144-amino-acid chain; its full sequence is MAKFLKYGRVVILLQGRFAGKKAVIVKSSEDGTKDRKFGHVLVAGVERSPKKVTKRMGSKKIQKRTSVKPFIKYVNLNHIMPTRYSVKELCDFKELVKEDKIKNNAKSEVRDTLKKVFVEKYRTINPEEKSASHTKFFFSKLRF.

Belongs to the eukaryotic ribosomal protein eL27 family.

It is found in the cytoplasm. The polypeptide is Large ribosomal subunit protein eL27 (RPL27) (Tetrahymena thermophila).